The chain runs to 354 residues: Rhodopsin (354 aa).

Residues 1 to 36 lie on the Extracellular side of the membrane; it reads MNGTEGENFYVPMSNKTGVVRSPFDYPQYYLGEPWM. Residues asparagine 2 and asparagine 15 are each glycosylated (N-linked (GlcNAc...) asparagine). A helical transmembrane segment spans residues 37–61; sequence FSALAAYMFFLILTGLPVNFLTLFV. The Cytoplasmic segment spans residues 62 to 73; that stretch reads TIQHKKLRQPLN. The helical transmembrane segment at 74-96 threads the bilayer; it reads YILLNLAVSDLFMVFGGFTTTII. Residues 97 to 110 lie on the Extracellular side of the membrane; sequence TSMNGYFIFGPAGC. Cysteine 110 and cysteine 187 are oxidised to a cystine. A helical transmembrane segment spans residues 111 to 133; sequence NFEGFFATLGGEVGLWCLVVLAI. The 'Ionic lock' involved in activated form stabilization signature appears at 134 to 136; sequence ERY. At 134–152 the chain is on the cytoplasmic side; that stretch reads ERYMVVCKPMANFRFGSQH. A helical transmembrane segment spans residues 153 to 173; sequence AIIGVVFTWIMALSCAGPPLV. At 174–202 the chain is on the extracellular side; that stretch reads GWSRYIPEGLQCSCGVDYYTMKPEVNNES. Residues 203-224 traverse the membrane as a helical segment; it reads FVIYMFVVHFTIPLIVIFFCYG. Over 225 to 252 the chain is Cytoplasmic; the sequence is RLVCTVKEAAAQQQESESTQRAEREVTR. A helical transmembrane segment spans residues 253-274; it reads MVIIMVVAFLICWVPYASVAFY. The Extracellular portion of the chain corresponds to 275 to 286; it reads IFINQGCDFTPF. The chain crosses the membrane as a helical span at residues 287–308; sequence FMTVPAFFAKSSAVYNPLIYIL. Lysine 296 carries the post-translational modification N6-(retinylidene)lysine. The Cytoplasmic portion of the chain corresponds to 309–354; it reads MNKQFRNCMITTICLGKNPFEEEESTSASASKTEASSVSSSQVAPA. Cysteine 322 carries S-palmitoyl cysteine lipidation. The segment at 333 to 354 is disordered; sequence STSASASKTEASSVSSSQVAPA. Residues 334–354 show a composition bias toward low complexity; that stretch reads TSASASKTEASSVSSSQVAPA.

This sequence belongs to the G-protein coupled receptor 1 family. Opsin subfamily. Phosphorylated on some or all of the serine and threonine residues present in the C-terminal region. Post-translationally, contains one covalently linked retinal chromophore.

Its subcellular location is the membrane. It is found in the cell projection. The protein localises to the cilium. The protein resides in the photoreceptor outer segment. Functionally, photoreceptor required for image-forming vision at low light intensity. While most salt water fish species use retinal as chromophore, most freshwater fish use 3-dehydroretinal, or a mixture of retinal and 3-dehydroretinal. Light-induced isomerization of 11-cis to all-trans retinal triggers a conformational change that activates signaling via G-proteins. Subsequent receptor phosphorylation mediates displacement of the bound G-protein alpha subunit by arrestin and terminates signaling. This Leucoraja erinaceus (Little skate) protein is Rhodopsin (rho).